The chain runs to 601 residues: RNA-binding protein MEX3B (601 aa).

Disordered stretches follow at residues 1–39 (MPSSLFADLERNGSGGGGGGGGGGGGGGSGGGETLDDQR) and 90–109 (GRQGGSGRDGDRRGFSISPT). Phosphoserine is present on Ser4. The segment covering 13–33 (GSGGGGGGGGGGGGGGSGGGE) has biased composition (gly residues). KH domains are found at residues 98–159 (DGDR…RREI) and 192–253 (QTTI…REEI). Disordered stretches follow at residues 284–332 (LHHG…TDSY) and 344–448 (TSRL…GGAS). Ser320 bears the Phosphoserine mark. Composition is skewed to low complexity over residues 320–331 (SSSSLGSASTDS) and 362–371 (NGNNNNNGNG). Positions 395 to 404 (DPAPAPPPGT) are enriched in pro residues. Positions 420 to 442 (AAPVSSSCSSSASSSASSSSVVF) are enriched in low complexity. A Phosphoserine modification is found at Ser494. The segment at 514–546 (LPGLPSSDTSGSSSSSSSSSSSSSSSSGLRRKG) is disordered. A compositionally biased stretch (low complexity) spans 519 to 540 (SSDTSGSSSSSSSSSSSSSSSS). Residues 550–590 (CSVCFESEVIAALVPCGHNLFCMECANRICEKSEPECPVCH) form an RING-type zinc finger.

In terms of processing, phosphorylation at Ser-494 creates a docking site for 14-3-3, which stabilizes the protein and modulates its ability to bind RNA.

Its subcellular location is the cytoplasm. It localises to the nucleus. The protein localises to the P-body. It is found in the cytoplasmic granule. Functionally, RNA-binding protein. May be involved in post-transcriptional regulatory mechanisms. The sequence is that of RNA-binding protein MEX3B (Mex3b) from Mus musculus (Mouse).